We begin with the raw amino-acid sequence, 301 residues long: GTPase IMAP family member 3 (301 aa).

Over 1–279 the chain is Cytoplasmic; it reads METLQNVVTG…GKKLEVLHSD (279 aa). One can recognise an AIG1-type G domain in the interval 20–223; the sequence is SRPLRILLVG…HSNDLFLHAE (204 aa). Residues 29–37, Ser50, 147–149, and Asn184 contribute to the GTP site; these read GKSGCGKSA and RKE. The interval 263–301 is required for targeting to the endoplasmic reticulum; it reads VLKVLPIGKKLEVLHSDFCWYLVLAILIFFVFFFLLFYV. The helical; Anchor for type IV membrane protein transmembrane segment at 280–300 threads the bilayer; it reads FCWYLVLAILIFFVFFFLLFY. Residue Val301 is a topological domain, lumenal.

This sequence belongs to the TRAFAC class TrmE-Era-EngA-EngB-Septin-like GTPase superfamily. AIG1/Toc34/Toc159-like paraseptin GTPase family. IAN subfamily. As to quaternary structure, interacts with BAD, BAK1, BAX, BCL2, BCL2L1/Bcl-xL and BCL2L11/BimEL. The interaction with BAX is increased, when cells initiate apoptosis upon IL2 withdrawal. In terms of tissue distribution, expressed in thymus (in thymocytes), spleen (in splenocytes), lymph node and, at lower levels, in lung. Highly expressed in T lymphocytes.

It is found in the endoplasmic reticulum membrane. During thymocyte development, may support the positive selection of CD4 and CD8 T cells. May play a role in mitochondrial DNA segregation in hematopoietic tissues. Binds GTP. The sequence is that of GTPase IMAP family member 3 (Gimap3) from Mus musculus (Mouse).